The primary structure comprises 61 residues: Small ribosomal subunit protein uS14 (61 aa).

Cysteine 24, cysteine 27, cysteine 40, and cysteine 43 together coordinate Zn(2+).

Belongs to the universal ribosomal protein uS14 family. Zinc-binding uS14 subfamily. In terms of assembly, part of the 30S ribosomal subunit. Contacts proteins S3 and S10. Requires Zn(2+) as cofactor.

Binds 16S rRNA, required for the assembly of 30S particles and may also be responsible for determining the conformation of the 16S rRNA at the A site. This is Small ribosomal subunit protein uS14 from Beutenbergia cavernae (strain ATCC BAA-8 / DSM 12333 / CCUG 43141 / JCM 11478 / NBRC 16432 / NCIMB 13614 / HKI 0122).